A 284-amino-acid chain; its full sequence is 2-dehydro-3-deoxyphosphooctonate aldolase (284 aa).

It belongs to the KdsA family.

The protein localises to the cytoplasm. The catalysed reaction is D-arabinose 5-phosphate + phosphoenolpyruvate + H2O = 3-deoxy-alpha-D-manno-2-octulosonate-8-phosphate + phosphate. It participates in carbohydrate biosynthesis; 3-deoxy-D-manno-octulosonate biosynthesis; 3-deoxy-D-manno-octulosonate from D-ribulose 5-phosphate: step 2/3. It functions in the pathway bacterial outer membrane biogenesis; lipopolysaccharide biosynthesis. This chain is 2-dehydro-3-deoxyphosphooctonate aldolase, found in Escherichia coli O157:H7.